A 356-amino-acid chain; its full sequence is Replication factor C subunit 3 (356 aa).

N6-acetyllysine is present on K20. A Phosphoserine modification is found at S125.

Belongs to the activator 1 small subunits family. Subunit of the RFC complex, an heteropentameric complex consisting of a large subunit RFC1 and four small subunits RFC2, RFC3, RFC4 and RFC5; the RFC complex interacts with PCNA. Forms an heterotetrameric complex with RFC2, RFC4 and RFC5; this complex has ATPase activity but is not stimulated by PCNA. The heterotetramer of subunits RFC2, RFC3, RFC4 and RFC5 interacts with RAD17. Interacts with CNTD1; this interaction facilitates crossover formation.

Its subcellular location is the nucleus. Subunit of the replication factor C (RFC) complex which acts during elongation of primed DNA templates by DNA polymerases delta and epsilon, and is necessary for ATP-dependent loading of proliferating cell nuclear antigen (PCNA) onto primed DNA. This Bos taurus (Bovine) protein is Replication factor C subunit 3 (RFC3).